Here is a 408-residue protein sequence, read N- to C-terminus: MSPCENDTPINWKRNLIVAWLGCFLTGAAFSLVMPFLPLYVEQLGVTGHSALNMWSGIVFSITFLFSSIASPFWGGLADRKGRKLMLLRSALGMGIVMVLMGLAQNIWQFLILRALLGLLGGFVPNANALIATQVPRNKSGWALGTLSTGGVSGALLGPMAGGLLADSYGLRPVFFITASVLILCFFVTLFCIREKFQPVSKKEMLHMREVVTSLKNPKLVLSLFVTTLIIQVATGSIAPILTLYVRELAGNVSNVAFISGMIASVPGVAALLSAPRLGKLGDRIGPEKILITALIFSVLLLIPMSYVQTPLQLGILRFLLGAADGALLPAVQTLLVYNSSNQIAGRIFSYNQSFRDIGNVTGPLMGAAISANYGFRAVFLVTAGVVLFNAVYSWNSLRRRRIPQVSN.

The next 11 membrane-spanning stretches (helical) occupy residues 16–36 (LIVA…VMPF), 58–78 (IVFS…GGLA), 92–112 (LGMG…QFLI), 115–135 (ALLG…ATQV), 146–166 (TLST…GLLA), 173–193 (PVFF…LFCI), 224–244 (LFVT…ILTL), 256–276 (VAFI…LSAP), 290–310 (ILIT…YVQT), 319–339 (FLLG…LVYN), and 378–398 (AVFL…WNSL).

The protein belongs to the major facilitator superfamily. DHA1 family. MdtG (TC 2.A.1.2.20) subfamily.

The protein localises to the cell inner membrane. Confers resistance to fosfomycin and deoxycholate. The sequence is that of Multidrug resistance protein MdtG from Escherichia coli (strain 55989 / EAEC).